The following is a 291-amino-acid chain: Bifunctional protein FolD (291 aa).

Residues 168-170, threonine 195, and valine 236 contribute to the NADP(+) site; that span reads GRG.

The protein belongs to the tetrahydrofolate dehydrogenase/cyclohydrolase family. In terms of assembly, homodimer.

The catalysed reaction is (6R)-5,10-methylene-5,6,7,8-tetrahydrofolate + NADP(+) = (6R)-5,10-methenyltetrahydrofolate + NADPH. It carries out the reaction (6R)-5,10-methenyltetrahydrofolate + H2O = (6R)-10-formyltetrahydrofolate + H(+). The protein operates within one-carbon metabolism; tetrahydrofolate interconversion. In terms of biological role, catalyzes the oxidation of 5,10-methylenetetrahydrofolate to 5,10-methenyltetrahydrofolate and then the hydrolysis of 5,10-methenyltetrahydrofolate to 10-formyltetrahydrofolate. This is Bifunctional protein FolD from Bifidobacterium longum (strain DJO10A).